We begin with the raw amino-acid sequence, 132 residues long: Small ribosomal subunit protein uS8 (132 aa).

It belongs to the universal ribosomal protein uS8 family. As to quaternary structure, part of the 30S ribosomal subunit. Contacts proteins S5 and S12.

One of the primary rRNA binding proteins, it binds directly to 16S rRNA central domain where it helps coordinate assembly of the platform of the 30S subunit. This chain is Small ribosomal subunit protein uS8, found in Alkaliphilus oremlandii (strain OhILAs) (Clostridium oremlandii (strain OhILAs)).